A 130-amino-acid polypeptide reads, in one-letter code: Small ribosomal subunit protein uS9 (130 aa).

Belongs to the universal ribosomal protein uS9 family.

This Bordetella parapertussis (strain 12822 / ATCC BAA-587 / NCTC 13253) protein is Small ribosomal subunit protein uS9.